Consider the following 146-residue polypeptide: Anti-sigma F factor (146 aa).

It belongs to the anti-sigma-factor family.

It catalyses the reaction L-seryl-[protein] + ATP = O-phospho-L-seryl-[protein] + ADP + H(+). It carries out the reaction L-threonyl-[protein] + ATP = O-phospho-L-threonyl-[protein] + ADP + H(+). Its function is as follows. Binds to sigma F and blocks its ability to form an RNA polymerase holoenzyme (E-sigma F). Phosphorylates SpoIIAA on a serine residue. This phosphorylation may enable SpoIIAA to act as an anti-anti-sigma factor that counteracts SpoIIAB and thus releases sigma F from inhibition. The chain is Anti-sigma F factor from Bacillus cereus (strain G9842).